The chain runs to 314 residues: Ribosomal protein L11 methyltransferase (314 aa).

4 residues coordinate S-adenosyl-L-methionine: Thr163, Gly184, Asp206, and Asn248.

Belongs to the methyltransferase superfamily. PrmA family.

It localises to the cytoplasm. It carries out the reaction L-lysyl-[protein] + 3 S-adenosyl-L-methionine = N(6),N(6),N(6)-trimethyl-L-lysyl-[protein] + 3 S-adenosyl-L-homocysteine + 3 H(+). Functionally, methylates ribosomal protein L11. This chain is Ribosomal protein L11 methyltransferase, found in Lactobacillus delbrueckii subsp. bulgaricus (strain ATCC BAA-365 / Lb-18).